The chain runs to 265 residues: Zinc import ATP-binding protein ZnuC (265 aa).

One can recognise an ABC transporter domain in the interval 6-221 (IRLEQVAVTL…PAFVELFGKN (216 aa)). Position 38-45 (38-45 (GPNGAGKT)) interacts with ATP. The disordered stretch occupies residues 245 to 265 (DAPATSSHTHTHVHGDHCKHG).

This sequence belongs to the ABC transporter superfamily. Zinc importer (TC 3.A.1.15.5) family. As to quaternary structure, the complex is composed of two ATP-binding proteins (ZnuC), two transmembrane proteins (ZnuB) and a solute-binding protein (ZnuA).

It localises to the cell inner membrane. It catalyses the reaction Zn(2+)(out) + ATP(in) + H2O(in) = Zn(2+)(in) + ADP(in) + phosphate(in) + H(+)(in). In terms of biological role, part of the ABC transporter complex ZnuABC involved in zinc import. Responsible for energy coupling to the transport system. This chain is Zinc import ATP-binding protein ZnuC, found in Pseudomonas savastanoi pv. phaseolicola (strain 1448A / Race 6) (Pseudomonas syringae pv. phaseolicola (strain 1448A / Race 6)).